We begin with the raw amino-acid sequence, 205 residues long: Thymidylate kinase (205 aa).

11-18 is an ATP binding site; that stretch reads GVEGAGKS.

Belongs to the thymidylate kinase family.

The catalysed reaction is dTMP + ATP = dTDP + ADP. Functionally, phosphorylation of dTMP to form dTDP in both de novo and salvage pathways of dTTP synthesis. In Vesicomyosocius okutanii subsp. Calyptogena okutanii (strain HA), this protein is Thymidylate kinase.